Here is a 463-residue protein sequence, read N- to C-terminus: Chromosomal replication initiator protein DnaA (463 aa).

Positions 1–83 (MSTNQIILTD…LQLFQHYNNT (83 aa)) are domain I, interacts with DnaA modulators. Positions 83 to 124 (TIKSIEIITKELPGITQTVIALPTKTFADIGSSELNAENIFS) are domain II. The tract at residues 125–343 (TLDVRFTFDN…GALNKVIAHS (219 aa)) is domain III, AAA+ region. ATP-binding residues include Gly171, Gly173, Lys174, and Thr175. Residues 344–463 (NFTLKEITLE…INLLMKILQN (120 aa)) form a domain IV, binds dsDNA region.

This sequence belongs to the DnaA family. In terms of assembly, oligomerizes as a right-handed, spiral filament on DNA at oriC.

It localises to the cytoplasm. Plays an essential role in the initiation and regulation of chromosomal replication. ATP-DnaA binds to the origin of replication (oriC) to initiate formation of the DNA replication initiation complex once per cell cycle. Binds the DnaA box (a 9 base pair repeat at the origin) and separates the double-stranded (ds)DNA. Forms a right-handed helical filament on oriC DNA; dsDNA binds to the exterior of the filament while single-stranded (ss)DNA is stabiized in the filament's interior. The ATP-DnaA-oriC complex binds and stabilizes one strand of the AT-rich DNA unwinding element (DUE), permitting loading of DNA polymerase. After initiation quickly degrades to an ADP-DnaA complex that is not apt for DNA replication. Binds acidic phospholipids. The sequence is that of Chromosomal replication initiator protein DnaA from Rickettsia massiliae (strain Mtu5).